A 309-amino-acid chain; its full sequence is Dermonecrotic toxin LarSicTox-alphaIB2bi (309 aa).

V1 is a signal peptide. A propeptide spanning residues R2–R27 is cleaved from the precursor. H38 is a catalytic residue. Mg(2+) contacts are provided by E58 and D60. The Nucleophile role is filled by H74. Intrachain disulfides connect C78-C84 and C80-C223. D118 is a Mg(2+) binding site. N286 carries N-linked (GlcNAc...) asparagine glycosylation.

The protein belongs to the arthropod phospholipase D family. Class II subfamily. Requires Mg(2+) as cofactor. As to expression, expressed by the venom gland.

The protein resides in the secreted. It catalyses the reaction an N-(acyl)-sphingosylphosphocholine = an N-(acyl)-sphingosyl-1,3-cyclic phosphate + choline. The catalysed reaction is N-hexanoyl-sphing-4-enine-1-phosphocholine = N-(hexanoyl)-sphing-4-enine-1,3-cyclic phosphate + choline. The enzyme catalyses N-(dodecanoyl)-sphing-4-enine-1-phosphocholine = N-dodecanoyl-sphing-4-enine-1,3-cyclic phosphate + choline. It carries out the reaction a 1-acyl-sn-glycero-3-phosphocholine = a 1-acyl-sn-glycero-2,3-cyclic phosphate + choline. It catalyses the reaction 1-tetradecanoyl-sn-glycero-3-phosphocholine = 1-tetradecanoyl-sn-glycero-2,3-cyclic phosphate + choline. The catalysed reaction is 1-octanoyl-sn-glycero-3-phosphocholine = 1-octanoyl-sn-glycero-2,3-cyclic phosphate + choline. The enzyme catalyses 1-hexadecanoyl-sn-glycero-3-phosphocholine = 1-hexadecanoyl-sn-glycero-2,3-cyclic phosphate + choline. It carries out the reaction an N-(acyl)-sphingosylphosphoethanolamine = an N-(acyl)-sphingosyl-1,3-cyclic phosphate + ethanolamine. It catalyses the reaction N-dodecanoyl-heptadecasphing-4-enine-1-phosphoethanolamine = N-dodecanoyl-heptadecasphing-4-enine-1,3-cyclic phosphate + ethanolamine. Its function is as follows. Dermonecrotic toxins cleave the phosphodiester linkage between the phosphate and headgroup of certain phospholipids (sphingolipid and lysolipid substrates), forming an alcohol (often choline) and a cyclic phosphate. This toxin acts on sphingomyelin (SM) with high activity and on lysophosphatidylcholine (LPC) and ceramide phosphoethanolamine (CPE) with low activity. In vivo, shows potent insecticidal activities. On mammals, induces dermonecrosis, hemolysis, increased vascular permeability, edema, inflammatory response, and platelet aggregation. This Loxosceles arizonica (Arizona brown spider) protein is Dermonecrotic toxin LarSicTox-alphaIB2bi.